We begin with the raw amino-acid sequence, 335 residues long: Probable cytosolic iron-sulfur protein assembly protein Ciao1 (335 aa).

WD repeat units lie at residues 12-51 (GHKG…WGTK), 57-96 (GHKR…FECN), 101-140 (GHEN…EFEC), 146-185 (PHTQ…NDWD), 192-231 (SHTS…NTAG), 250-289 (QHSR…KPDE), and 301-335 (AHDQ…KVSE).

The protein belongs to the WD repeat CIA1 family.

In terms of biological role, essential component of the cytosolic iron-sulfur (Fe/S) protein assembly machinery. Required for the maturation of extramitochondrial Fe/S proteins. In Drosophila sechellia (Fruit fly), this protein is Probable cytosolic iron-sulfur protein assembly protein Ciao1.